The primary structure comprises 203 residues: Protein GrpE (203 aa).

Over residues 1–10 the composition is skewed to basic and acidic residues; sequence MSNESIKAEQ. The interval 1 to 20 is disordered; that stretch reads MSNESIKAEQDLIQEGVESE.

This sequence belongs to the GrpE family. Homodimer.

It localises to the cytoplasm. Participates actively in the response to hyperosmotic and heat shock by preventing the aggregation of stress-denatured proteins, in association with DnaK and GrpE. It is the nucleotide exchange factor for DnaK and may function as a thermosensor. Unfolded proteins bind initially to DnaJ; upon interaction with the DnaJ-bound protein, DnaK hydrolyzes its bound ATP, resulting in the formation of a stable complex. GrpE releases ADP from DnaK; ATP binding to DnaK triggers the release of the substrate protein, thus completing the reaction cycle. Several rounds of ATP-dependent interactions between DnaJ, DnaK and GrpE are required for fully efficient folding. The chain is Protein GrpE from Shewanella sp. (strain MR-4).